The sequence spans 326 residues: 4-hydroxy-3-methylbut-2-enyl diphosphate reductase 1 (326 aa).

Cys27 serves as a coordination point for [4Fe-4S] cluster. Residues His56 and His89 each coordinate (2E)-4-hydroxy-3-methylbut-2-enyl diphosphate. His56 and His89 together coordinate dimethylallyl diphosphate. Isopentenyl diphosphate is bound by residues His56 and His89. Cys111 contributes to the [4Fe-4S] cluster binding site. Position 139 (His139) interacts with (2E)-4-hydroxy-3-methylbut-2-enyl diphosphate. Residue His139 participates in dimethylallyl diphosphate binding. His139 contributes to the isopentenyl diphosphate binding site. Glu141 functions as the Proton donor in the catalytic mechanism. Thr179 is a (2E)-4-hydroxy-3-methylbut-2-enyl diphosphate binding site. Cys209 serves as a coordination point for [4Fe-4S] cluster. (2E)-4-hydroxy-3-methylbut-2-enyl diphosphate contacts are provided by Ser237, Ser238, Asn239, and Ser281. Dimethylallyl diphosphate contacts are provided by Ser237, Ser238, Asn239, and Ser281. Positions 237, 238, 239, and 281 each coordinate isopentenyl diphosphate.

Belongs to the IspH family. [4Fe-4S] cluster serves as cofactor.

The enzyme catalyses isopentenyl diphosphate + 2 oxidized [2Fe-2S]-[ferredoxin] + H2O = (2E)-4-hydroxy-3-methylbut-2-enyl diphosphate + 2 reduced [2Fe-2S]-[ferredoxin] + 2 H(+). It carries out the reaction dimethylallyl diphosphate + 2 oxidized [2Fe-2S]-[ferredoxin] + H2O = (2E)-4-hydroxy-3-methylbut-2-enyl diphosphate + 2 reduced [2Fe-2S]-[ferredoxin] + 2 H(+). Its pathway is isoprenoid biosynthesis; dimethylallyl diphosphate biosynthesis; dimethylallyl diphosphate from (2E)-4-hydroxy-3-methylbutenyl diphosphate: step 1/1. The protein operates within isoprenoid biosynthesis; isopentenyl diphosphate biosynthesis via DXP pathway; isopentenyl diphosphate from 1-deoxy-D-xylulose 5-phosphate: step 6/6. Catalyzes the conversion of 1-hydroxy-2-methyl-2-(E)-butenyl 4-diphosphate (HMBPP) into a mixture of isopentenyl diphosphate (IPP) and dimethylallyl diphosphate (DMAPP). Acts in the terminal step of the DOXP/MEP pathway for isoprenoid precursor biosynthesis. This chain is 4-hydroxy-3-methylbut-2-enyl diphosphate reductase 1, found in Burkholderia pseudomallei (strain K96243).